Here is a 174-residue protein sequence, read N- to C-terminus: Crossover junction endodeoxyribonuclease RuvC (174 aa).

Catalysis depends on residues Asp-8, Glu-69, and Asp-141. Residues Asp-8, Glu-69, and Asp-141 each coordinate Mg(2+).

Belongs to the RuvC family. In terms of assembly, homodimer which binds Holliday junction (HJ) DNA. The HJ becomes 2-fold symmetrical on binding to RuvC with unstacked arms; it has a different conformation from HJ DNA in complex with RuvA. In the full resolvosome a probable DNA-RuvA(4)-RuvB(12)-RuvC(2) complex forms which resolves the HJ. Mg(2+) is required as a cofactor.

It is found in the cytoplasm. The catalysed reaction is Endonucleolytic cleavage at a junction such as a reciprocal single-stranded crossover between two homologous DNA duplexes (Holliday junction).. In terms of biological role, the RuvA-RuvB-RuvC complex processes Holliday junction (HJ) DNA during genetic recombination and DNA repair. Endonuclease that resolves HJ intermediates. Cleaves cruciform DNA by making single-stranded nicks across the HJ at symmetrical positions within the homologous arms, yielding a 5'-phosphate and a 3'-hydroxyl group; requires a central core of homology in the junction. The consensus cleavage sequence is 5'-(A/T)TT(C/G)-3'. Cleavage occurs on the 3'-side of the TT dinucleotide at the point of strand exchange. HJ branch migration catalyzed by RuvA-RuvB allows RuvC to scan DNA until it finds its consensus sequence, where it cleaves and resolves the cruciform DNA. The polypeptide is Crossover junction endodeoxyribonuclease RuvC (Xanthomonas axonopodis pv. citri (strain 306)).